Reading from the N-terminus, the 318-residue chain is Mevalonate 3-kinase (318 aa).

Leucine 19 is a binding site for substrate. ATP-binding positions include 96 to 100 (YSSQN) and 105 to 108 (SGSS). Substrate is bound by residues glutamate 140 and arginine 144. The ATP site is built by arginine 185 and serine 188.

It belongs to the GHMP kinase family. In terms of assembly, homodimer.

The catalysed reaction is (R)-mevalonate + ATP = (R)-3-phosphomevalonate + ADP + H(+). Its pathway is isoprenoid biosynthesis; isopentenyl diphosphate biosynthesis via mevalonate pathway. Functionally, catalyzes the phosphorylation of mevalonate (MVA) to yield mevalonate-3-phosphate. Functions in an alternative mevalonate pathway, only present in extreme acidophiles of the Thermoplasmatales order, which passes through mevalonate 3-phosphate rather than mevalonate 5-phosphate. The chain is Mevalonate 3-kinase from Thermoplasma acidophilum (strain ATCC 25905 / DSM 1728 / JCM 9062 / NBRC 15155 / AMRC-C165).